The following is a 428-amino-acid chain: Arabinosyltransferase RRA2 (428 aa).

Residues 1 to 15 lie on the Cytoplasmic side of the membrane; the sequence is MAGRRDRIQQLRGSR. The helical; Signal-anchor for type II membrane protein transmembrane segment at 16-36 threads the bilayer; the sequence is IAIAIFVGILIGCVCSVLFPN. The Lumenal segment spans residues 37-428; it reads GFFNSGSSLI…ALDSFPDGSD (392 aa). The DXD motif motif lies at 250 to 252; it reads DVD. Asparagine 278 is a glycosylation site (N-linked (GlcNAc...) asparagine).

Belongs to the glycosyltransferase 77 family. In terms of tissue distribution, expressed in roots, rosette and cauline leaves, stems, flowers and siliques.

The protein resides in the golgi apparatus membrane. Functionally, plays a role in the arabinosylation of cell wall components. Involved in the arabinosylation of extensin proteins in root hair cells. Extensins are structural glycoproteins present in cell walls and its arabinosylation is important for root hair cell development. The chain is Arabinosyltransferase RRA2 from Arabidopsis thaliana (Mouse-ear cress).